A 292-amino-acid polypeptide reads, in one-letter code: NAD kinase (292 aa).

Asp73 serves as the catalytic Proton acceptor. NAD(+) contacts are provided by residues 73 to 74, 147 to 148, His158, Arg175, Asp177, 188 to 193, and Gln247; these read DG, NE, and TAYSLS.

Belongs to the NAD kinase family. It depends on a divalent metal cation as a cofactor.

The protein resides in the cytoplasm. It catalyses the reaction NAD(+) + ATP = ADP + NADP(+) + H(+). Its function is as follows. Involved in the regulation of the intracellular balance of NAD and NADP, and is a key enzyme in the biosynthesis of NADP. Catalyzes specifically the phosphorylation on 2'-hydroxyl of the adenosine moiety of NAD to yield NADP. In Escherichia coli (strain UTI89 / UPEC), this protein is NAD kinase.